The primary structure comprises 237 residues: Regulator of G-protein signaling 9-binding protein (237 aa).

The Cytoplasmic portion of the chain corresponds to 1–214; sequence MAKEECKALL…TGPCDLSKAK (214 aa). 2 coiled-coil regions span residues 29–58 and 144–169; these read GSAD…RLRL and VEDL…MKVN. Positions 153–202 are SNARE-like; that stretch reads EILQVGEMIQDMEMKVNVPRWTVQARQAAGAELLSSASAGVSSVGGVSVE. A helical; Anchor for type IV membrane protein membrane pass occupies residues 215-234; sequence AATIFSAVLLAAVALAVCVA. The Extracellular segment spans residues 235–237; the sequence is KLS.

This sequence belongs to the RGS7BP/RGS9BP family. As to quaternary structure, specifically interacts with isoform RGS9-1 of RGS9. Component of the RGS9-1-Gbeta5 complex composed of RGS9-1, Gbeta5 (GNB5) and RGS9BP. As to expression, specifically expressed in the retina. Only present in photoreceptors (at protein level).

It is found in the membrane. Functionally, regulator of G protein-coupled receptor (GPCR) signaling in phototransduction. Participates in the recovery phase of visual transduction via its interaction with RGS9-1 isoform. Acts as a membrane-anchor that mediates the targeting of RGS9-1 to the photoreceptor outer segment, where phototransduction takes place. Enhances the ability of RGS9-1 to stimulate G protein GTPase activity, allowing the visual signal to be terminated on the physiologically time scale. It also controls the proteolytic stability of RGS9-1, probably by protecting it from degradation. This is Regulator of G-protein signaling 9-binding protein (RGS9BP) from Bos taurus (Bovine).